The chain runs to 284 residues: T-cell leukemia homeobox protein 2 (284 aa).

Disordered regions lie at residues 1–50 (MEPG…NGAF), 78–106 (GGVI…GPSG), and 139–166 (FSGT…SFSR). Gly residues predominate over residues 30 to 50 (TPGGGLGLGRGGQGHGENGAF). A compositionally biased stretch (pro residues) spans 87-96 (RPLPVPPPAG). A DNA-binding region (homeobox) is located at residues 157–216 (RKKPRTSFSRSQVLELERRFLRQKYLASAERAALAKALRMTDAQVKTWFQNRRTKWRRQT).

The protein localises to the nucleus. In terms of biological role, transcription activator that binds DNA elements with the consensus sequence 5'-CGGTAATTGG-3'. Binds DNA via its homeobox. Required for normal cell death of enteric neurons in the gastrointestinal tract. Required for normal development of the enteric nervous system, and for proper development of normal motility of the gastrointestinal tract. The sequence is that of T-cell leukemia homeobox protein 2 (TLX2) from Homo sapiens (Human).